The primary structure comprises 969 residues: Exoribonuclease II, mitochondrial (969 aa).

The N-terminal 41 residues, 1 to 41 (MVVRRKVHVLLIARSFHSYTPCFRVTTRGKRQRSKSKQQAK), are a transit peptide targeting the mitochondrion. Over residues 28–38 (RGKRQRSKSKQ) the composition is skewed to basic residues. Residues 28-54 (RGKRQRSKSKQQAKVELDHTRELDNDQ) form a disordered region. A compositionally biased stretch (basic and acidic residues) spans 40–51 (AKVELDHTRELD). Residues 522–853 (RYDFGDLRVF…NHLQIHRHLQ (332 aa)) enclose the RNB domain.

This sequence belongs to the RNR ribonuclease family. As to quaternary structure, MSU1 and SUV3 are the two components of the mitochondrial degradosome (mtEXO).

It is found in the mitochondrion matrix. It carries out the reaction Exonucleolytic cleavage in the 3'- to 5'-direction to yield nucleoside 5'-phosphates.. Its function is as follows. Essential for mitochondrial biogenesis. Required for intron-independent turnover and processing of mitochondrial RNA. Participates in 3' mtRNA processing where it hydrolyzes single-stranded RNA or partially double-stranded RNA with 3' single-stranded tails. This chain is Exoribonuclease II, mitochondrial (DSS1), found in Saccharomyces cerevisiae (strain ATCC 204508 / S288c) (Baker's yeast).